Here is a 290-residue protein sequence, read N- to C-terminus: Porphobilinogen deaminase (290 aa).

Cys-237 is subject to S-(dipyrrolylmethanemethyl)cysteine.

It belongs to the HMBS family. As to quaternary structure, monomer. It depends on dipyrromethane as a cofactor.

The enzyme catalyses 4 porphobilinogen + H2O = hydroxymethylbilane + 4 NH4(+). It functions in the pathway porphyrin-containing compound metabolism; protoporphyrin-IX biosynthesis; coproporphyrinogen-III from 5-aminolevulinate: step 2/4. Its function is as follows. Tetrapolymerization of the monopyrrole PBG into the hydroxymethylbilane pre-uroporphyrinogen in several discrete steps. In Clostridium botulinum (strain ATCC 19397 / Type A), this protein is Porphobilinogen deaminase.